A 286-amino-acid polypeptide reads, in one-letter code: Hypersensitive-induced response protein 1 (286 aa).

Residue Gly-2 is the site of N-myristoyl glycine attachment. Positions 114–190 form a coiled coil; it reads LDDVFEQKND…EKILQIKRAE (77 aa).

Self-interacts and forms heteromers. Interacts with NB-LRR class of R proteins before R proteins (e.g. RPS2 or RPM1) are activated by the effectors. Interacts with LRR1.

Its subcellular location is the cell membrane. In terms of biological role, positive regulator of hypersensitive response (HR)-like cell death. May be involved in potassium ion channel regulation. The polypeptide is Hypersensitive-induced response protein 1 (Arabidopsis thaliana (Mouse-ear cress)).